A 344-amino-acid chain; its full sequence is Phosphoribosylformylglycinamidine cyclo-ligase (344 aa).

This sequence belongs to the AIR synthase family.

The protein resides in the cytoplasm. The enzyme catalyses 2-formamido-N(1)-(5-O-phospho-beta-D-ribosyl)acetamidine + ATP = 5-amino-1-(5-phospho-beta-D-ribosyl)imidazole + ADP + phosphate + H(+). It participates in purine metabolism; IMP biosynthesis via de novo pathway; 5-amino-1-(5-phospho-D-ribosyl)imidazole from N(2)-formyl-N(1)-(5-phospho-D-ribosyl)glycinamide: step 2/2. The protein is Phosphoribosylformylglycinamidine cyclo-ligase of Synechococcus sp. (strain RCC307).